A 270-amino-acid polypeptide reads, in one-letter code: NAD kinase (270 aa).

Asp49 functions as the Proton acceptor in the catalytic mechanism. NAD(+)-binding positions include 49-50 (DG), Arg54, 126-127 (NE), Arg152, Asp154, 165-170 (TAYNKS), Ala189, and Gln227.

Belongs to the NAD kinase family. A divalent metal cation is required as a cofactor.

The protein localises to the cytoplasm. The catalysed reaction is NAD(+) + ATP = ADP + NADP(+) + H(+). Its function is as follows. Involved in the regulation of the intracellular balance of NAD and NADP, and is a key enzyme in the biosynthesis of NADP. Catalyzes specifically the phosphorylation on 2'-hydroxyl of the adenosine moiety of NAD to yield NADP. This is NAD kinase from Lactococcus lactis subsp. cremoris (strain SK11).